The sequence spans 194 residues: 7-methyl-GTP pyrophosphatase (194 aa).

Aspartate 69 serves as the catalytic Proton acceptor.

The protein belongs to the Maf family. YceF subfamily. It depends on a divalent metal cation as a cofactor.

Its subcellular location is the cytoplasm. The catalysed reaction is N(7)-methyl-GTP + H2O = N(7)-methyl-GMP + diphosphate + H(+). Functionally, nucleoside triphosphate pyrophosphatase that hydrolyzes 7-methyl-GTP (m(7)GTP). May have a dual role in cell division arrest and in preventing the incorporation of modified nucleotides into cellular nucleic acids. This Salmonella choleraesuis (strain SC-B67) protein is 7-methyl-GTP pyrophosphatase (yceF1).